Here is a 308-residue protein sequence, read N- to C-terminus: Aspartate carbamoyltransferase catalytic subunit (308 aa).

The carbamoyl phosphate site is built by Arg50 and Thr51. Position 78 (Lys78) interacts with L-aspartate. Carbamoyl phosphate-binding residues include Arg100, His131, and Gln134. L-aspartate is bound by residues Arg164 and Arg216. Residues Ala259 and Pro260 each contribute to the carbamoyl phosphate site.

The protein belongs to the aspartate/ornithine carbamoyltransferase superfamily. ATCase family. As to quaternary structure, heterododecamer (2C3:3R2) of six catalytic PyrB chains organized as two trimers (C3), and six regulatory PyrI chains organized as three dimers (R2).

The enzyme catalyses carbamoyl phosphate + L-aspartate = N-carbamoyl-L-aspartate + phosphate + H(+). It functions in the pathway pyrimidine metabolism; UMP biosynthesis via de novo pathway; (S)-dihydroorotate from bicarbonate: step 2/3. Functionally, catalyzes the condensation of carbamoyl phosphate and aspartate to form carbamoyl aspartate and inorganic phosphate, the committed step in the de novo pyrimidine nucleotide biosynthesis pathway. The protein is Aspartate carbamoyltransferase catalytic subunit of Oenococcus oeni (strain ATCC BAA-331 / PSU-1).